Consider the following 251-residue polypeptide: Uridylate kinase (251 aa).

ATP is bound at residue lysine 19–glycine 22. Glycine 61 serves as a coordination point for UMP. Positions 62 and 66 each coordinate ATP. UMP-binding positions include aspartate 81 and threonine 142 to threonine 149. The ATP site is built by threonine 169, tyrosine 175, and aspartate 178.

Belongs to the UMP kinase family. In terms of assembly, homohexamer.

Its subcellular location is the cytoplasm. The enzyme catalyses UMP + ATP = UDP + ADP. The protein operates within pyrimidine metabolism; CTP biosynthesis via de novo pathway; UDP from UMP (UMPK route): step 1/1. With respect to regulation, inhibited by UTP. In terms of biological role, catalyzes the reversible phosphorylation of UMP to UDP. This Anaeromyxobacter dehalogenans (strain 2CP-C) protein is Uridylate kinase.